Here is a 204-residue protein sequence, read N- to C-terminus: Kunitz type trypsin inhibitor 106 (204 aa).

The signal sequence occupies residues 1–26; it reads MSMRLSIRTLIILAHVCLFITTTTIA. Residue asparagine 62 is glycosylated (N-linked (GlcNAc...) asparagine). Cysteine 65 and cysteine 112 are disulfide-bonded. The N-linked (GlcNAc...) asparagine glycan is linked to asparagine 141. 2 disulfide bridges follow: cysteine 164–cysteine 176 and cysteine 169–cysteine 172.

This sequence belongs to the protease inhibitor I3 (leguminous Kunitz-type inhibitor) family. In terms of assembly, interacts with SCP1 and CP. Expressed at low levels in non-mycorrhizal roots.

It localises to the secreted. The protein resides in the extracellular space. Its subcellular location is the apoplast. Protease inhibitor that, together with SCP1, controls mycorrhiza establishment and arbuscule development during root colonization by arbuscular mycorrhizal (AM) fungi (e.g. Rhizophagus irregularis), probably by degrading SCP1 in the apoplast of the periarbuscular region. This chain is Kunitz type trypsin inhibitor 106, found in Medicago truncatula (Barrel medic).